A 365-amino-acid polypeptide reads, in one-letter code: Peptide chain release factor 2 (365 aa).

Glutamine 252 carries the post-translational modification N5-methylglutamine.

The protein belongs to the prokaryotic/mitochondrial release factor family. Post-translationally, methylated by PrmC. Methylation increases the termination efficiency of RF2.

Its subcellular location is the cytoplasm. In terms of biological role, peptide chain release factor 2 directs the termination of translation in response to the peptide chain termination codons UGA and UAA. The protein is Peptide chain release factor 2 of Shigella flexneri.